Reading from the N-terminus, the 290-residue chain is MPSLRDIRNRIGSVRSTRQITKAMKMVSAAKLRRAQDAVLKTRPYAVLLDQTLSRLAARAAAEEQVAHPLLAPRAQRTAEVVVVTSDRGLAGGFNSNICRFVQRFLTENADRFERIALSTVGKKGREYFKARRLDIRKDYTGVHANLAYEKAEALAREATERYLAGEVDAVFLAYNEFKSAISQKQVVVQLLPIDTSAAGADATGIDFKYEPSREALLAELLPRHVAMQVWRALLESAASEHGARMSAMESATKNAEEMIASLSLQYNRARQAYVTKELMEIVGGAEALK.

It belongs to the ATPase gamma chain family. F-type ATPases have 2 components, CF(1) - the catalytic core - and CF(0) - the membrane proton channel. CF(1) has five subunits: alpha(3), beta(3), gamma(1), delta(1), epsilon(1). CF(0) has three main subunits: a, b and c.

It localises to the cell inner membrane. Its function is as follows. Produces ATP from ADP in the presence of a proton gradient across the membrane. The gamma chain is believed to be important in regulating ATPase activity and the flow of protons through the CF(0) complex. This is ATP synthase gamma chain from Anaeromyxobacter dehalogenans (strain 2CP-1 / ATCC BAA-258).